Here is a 976-residue protein sequence, read N- to C-terminus: Vacuolar membrane protease (976 aa).

The Cytoplasmic segment spans residues 1–15 (MKLKSVFRSVLKYRK). Residues 16–36 (TNLSLLLLITYSIITLLYIFD) form a helical membrane-spanning segment. Residues 37-359 (HERYKLNLPK…KFFVISAKTL (323 aa)) lie on the Vacuolar side of the membrane. N-linked (GlcNAc...) asparagine glycans are attached at residues Asn96 and Asn121. 2 residues coordinate Zn(2+): His156 and Asp168. The N-linked (GlcNAc...) asparagine glycan is linked to Asn189. The Proton acceptor role is filled by Glu200. Glu201 contributes to the Zn(2+) binding site. N-linked (GlcNAc...) asparagine glycosylation is found at Asn212 and Asn217. Residues Glu226 and His300 each contribute to the Zn(2+) site. The helical transmembrane segment at 360–380 (FYWNCIFLLVSPVVAIGLYLI) threads the bilayer. Over 381 to 392 (SRDRMTWKSHSW) the chain is Cytoplasmic. Residues 393–412 (LSWTRFPLSLAAGIIVQKLF) traverse the membrane as a helical segment. Residues 413-428 (SNDIIRSNPLTFSRNY) lie on the Vacuolar side of the membrane. The helical transmembrane segment at 429–449 (FWPISAFFTQVIFTSYVLINC) threads the bilayer. Residues 450-461 (SNFFFPCADMKS) are Cytoplasmic-facing. The helical transmembrane segment at 462–482 (LSIIELFIILWTILLFTSKLL) threads the bilayer. The Vacuolar segment spans residues 483 to 496 (YSSDYRYTGLYPLS). The helical transmembrane segment at 497–517 (IFFLLSTIAAILRLLALALGM) threads the bilayer. Residues 518–627 (RTRKRLGREC…NSLKLEYTDY (110 aa)) are Cytoplasmic-facing. Residues 528-610 (RDHHSNYSSH…PLLKGSNSME (83 aa)) are disordered. Residues 549–558 (NLEQPQDQFT) show a composition bias toward polar residues. Positions 559–570 (SSQDDQASIQDD) are enriched in low complexity. Positions 582-601 (NVDEDHGMDSSSQQHDERVP) are enriched in basic and acidic residues. Residues 628–648 (AWIIQFLLIVPIPSFILFNSV) form a helical membrane-spanning segment. Residues 649–668 (DVIMDALNHTVQEGSKATFD) lie on the Vacuolar side of the membrane. The N-linked (GlcNAc...) asparagine glycan is linked to Asn656. Residues 669–689 (VLRFGMVGSILMALPILPFFY) form a helical membrane-spanning segment. Residues 690–692 (KVN) are Cytoplasmic-facing. A helical membrane pass occupies residues 693–713 (YITISLTALLFLISASKTLLV). Over 714–976 (HPFTNSNPLK…LVIVKDAIIL (263 aa)) the chain is Vacuolar. Asn768, Asn796, Asn811, Asn866, and Asn937 each carry an N-linked (GlcNAc...) asparagine glycan.

It belongs to the peptidase M28 family. The cofactor is Zn(2+).

It is found in the vacuole membrane. In terms of biological role, may be involved in vacuolar sorting and osmoregulation. This Saccharomyces cerevisiae (strain YJM789) (Baker's yeast) protein is Vacuolar membrane protease.